The sequence spans 169 residues: NADH-quinone oxidoreductase subunit I (169 aa).

4Fe-4S ferredoxin-type domains follow at residues 61–90 and 100–129; these read RKYK…IEAQ and VRYD…EGPN. The [4Fe-4S] cluster site is built by Cys-70, Cys-73, Cys-76, Cys-80, Cys-109, Cys-112, Cys-115, and Cys-119.

This sequence belongs to the complex I 23 kDa subunit family. In terms of assembly, NDH-1 is composed of 14 different subunits. Subunits NuoA, H, J, K, L, M, N constitute the membrane sector of the complex. [4Fe-4S] cluster is required as a cofactor.

It localises to the cell inner membrane. It catalyses the reaction a quinone + NADH + 5 H(+)(in) = a quinol + NAD(+) + 4 H(+)(out). Its function is as follows. NDH-1 shuttles electrons from NADH, via FMN and iron-sulfur (Fe-S) centers, to quinones in the respiratory chain. The immediate electron acceptor for the enzyme in this species is believed to be ubiquinone. Couples the redox reaction to proton translocation (for every two electrons transferred, four hydrogen ions are translocated across the cytoplasmic membrane), and thus conserves the redox energy in a proton gradient. This Ehrlichia chaffeensis (strain ATCC CRL-10679 / Arkansas) protein is NADH-quinone oxidoreductase subunit I.